The primary structure comprises 76 residues: Putative UPF0377 protein YGL260W (76 aa).

Belongs to the UPF0377 family.

This is Putative UPF0377 protein YGL260W from Saccharomyces cerevisiae (strain ATCC 204508 / S288c) (Baker's yeast).